Reading from the N-terminus, the 1271-residue chain is Zinc finger transcription factor Trps1 (1271 aa).

2 disordered regions span residues 1 to 76 (MVRK…DSAS) and 124 to 155 (SPIKSEADDTQELASSASVDSLEAKEENDMSP). Residues 34-49 (SKEISTDPMQENSEQS) are compositionally biased toward polar residues. The segment covering 54–65 (HNSDDHSFHDQE) has biased composition (basic and acidic residues). Polar residues predominate over residues 66-76 (PSSSINKDSAS). Residues 217–242 (FKCNICGYGYYGNDPTDLIKHFRKYH) form a C2H2-type 1; atypical zinc finger. The segment at 328–353 (FRCKFCNFTYLAKSATELEQHFLKTH) adopts a C2H2-type 2; atypical zinc-finger fold. Positions 353-387 (HPNKMKMSSDSGKPSEKSTNKSSPIPRSCEPGDLG) are disordered. The C2H2-type 3; atypical zinc-finger motif lies at 426–451 (YWCKFCSFSCESSSNSKLLEHHSKQH). A C2H2-type 4; atypical zinc finger spans residues 513–543 (YNCQFCDFRYSKSHGPEVILVGPLLRHYQQH). 3 C2H2-type zinc fingers span residues 604 to 627 (HQCDQCSFSSPDVDVLLLHYENAH), 656 to 679 (HSCTKCDFIVQVEEDLPRHYRRVH), and 682 to 705 (YKCRQCNFTAADTQSLLDHFNSAH). The interval 843–877 (GVTAGASGEKSGQHTPQYPTAGDSKSKDESQSLLR) is disordered. A GATA-type zinc finger spans residues 886–910 (CANCLTTKTSLWRKNANGGYVCNAC). 3 disordered regions span residues 938–987 (RTRK…RENQ), 1031–1064 (SPQESSGEPGNSSSVSDGKGSSERGSPIEKYMRP), and 1154–1196 (LDLA…EKSD). Residues 972 to 985 (IRSEDHSMEGHQRE) show a composition bias toward basic and acidic residues. The segment covering 1031–1049 (SPQESSGEPGNSSSVSDGK) has biased composition (low complexity). 2 stretches are compositionally biased toward basic and acidic residues: residues 1050-1062 (GSSERGSPIEKYM) and 1170-1196 (DSKEKSKSPVSVKDDGPLNVTKIEKSD). Residues 1153–1271 (PLDLAMKHSR…QAEKNGKNKD (119 aa)) are transcriptional repressor domain. Residues K1182 and K1191 each participate in a glycyl lysine isopeptide (Lys-Gly) (interchain with G-Cter in SUMO) cross-link. 2 C2H2-type zinc fingers span residues 1205 to 1227 (TKCVHCGIVFLDEVMYALHMSCH) and 1233 to 1257 (FQCSICQHLCTDKYDFTTHIQRGLH).

As to quaternary structure, binds specifically to GATA sequences. Sumoylated. Sumoylation in the repressor domain inhibits the transcription repression activity. Sumoylation on Lys-1191 is the major site. Appears to be sumoylated on multiple sites.

It localises to the nucleus. Transcriptional repressor. Represses expression of GATA-regulated genes at selected sites and stages in vertebrate development. The chain is Zinc finger transcription factor Trps1 (trps1) from Xenopus laevis (African clawed frog).